A 2123-amino-acid polypeptide reads, in one-letter code: Bromodomain adjacent to zinc finger domain protein 2B (2123 aa).

Disordered regions lie at residues 1–129, 144–306, 357–402, 473–534, 546–691, 756–793, and 937–960; these read MESG…VNGT, TPAS…LSQQ, PSPD…EMGK, NENV…HPHP, RGTD…RRVA, RAMD…GSAE, and ARKK…LNKE. A compositionally biased stretch (low complexity) spans 7 to 46; sequence LPSSPASSTTPTSSSAPSVASAVSKSSLSTGAASLSSTAS. Positions 83-95 are enriched in pro residues; that stretch reads FFPPLLGIPPLFA. Positions 100-116 are enriched in polar residues; it reads NHDSSFHSRTSGKSSRN. Composition is skewed to low complexity over residues 147–157 and 193–216; these read SSSMGQNQSTS and ESSS…ISSS. The segment covering 217 to 243 has biased composition (acidic residues); that stretch reads DSDDLEEEEEEDQSVEESEDDDSDSET. The span at 259–277 shows a compositional bias: basic and acidic residues; that stretch reads SDPKTDGQKATEKAQERRT. Composition is skewed to low complexity over residues 291-306 and 366-379; these read PPFQ…LSQQ and NKNT…LTSE. Residues 473-502 are compositionally biased toward polar residues; that stretch reads NENVSSSTPFSSPVNLSTSGRRAPGSQTPA. Over residues 546 to 559 the composition is skewed to basic and acidic residues; the sequence is RGTDSDVPSSKDSE. Acidic residues predominate over residues 560–587; the sequence is DSNEDEEEDDEEEDEEDDEDDESDDSQS. Low complexity predominate over residues 588-597; the sequence is ESDSNSQSDS. A compositionally biased stretch (acidic residues) spans 598 to 615; that stretch reads EGSEDDEEKDQEESDSDT. Low complexity-rich tracts occupy residues 628 to 637 and 671 to 683; these read SSSAKSPPSS and TSSS…PHSG. Residues 690-765 form the MBD domain; sequence VADDQELRIP…RAMDGRRGRP (76 aa). Residues 756-778 are compositionally biased toward basic and acidic residues; sequence RAMDGRRGRPPNPDRPRAREESR. Positions 1004–1069 constitute a DDT domain; that stretch reads GTTFSDCLMV…LSAAVCDPGL (66 aa). Disordered regions lie at residues 1183–1260, 1396–1444, 1499–1526, and 1588–1614; these read RDAS…QTAS, PPES…KTDA, TLVT…SSVQ, and FLTS…AQPV. The segment covering 1214–1238 has biased composition (acidic residues); sequence SDYDDDDDDDSDDQADEDEEDEEDK. A compositionally biased stretch (basic and acidic residues) spans 1239–1248; the sequence is DDKKGKKTDI. Residues 1254 to 1281 adopt a coiled-coil conformation; that stretch reads EGDQTASVEELEKQIEKLSKQQSQYRRK. Polar residues-rich tracts occupy residues 1408–1422 and 1430–1444; these read NVST…QNSG and PSAT…KTDA. Residues 1505–1515 are compositionally biased toward pro residues; sequence SQPPSKSPSPA. Positions 1588-1600 are enriched in low complexity; the sequence is FLTSSVASSKSDS. Residues 1886–1936 form a PHD-type zinc finger; the sequence is KVYCQICRKGDNEELLLLCDGCDKGCHTYCHRPKITTIPDGDWFCPACISK. Residues 1949 to 2013 form a disordered region; that stretch reads VKGKKTNDSK…AESTTSIKKP (65 aa). Positions 1984-1995 are enriched in basic and acidic residues; sequence GSKELKKRKMEE. The segment covering 1996–2010 has biased composition (polar residues); the sequence is TTSLNLSKAESTTSI. The 105-residue stretch at 2015 to 2119 folds into the Bromo domain; the sequence is KDESRDLALC…KYFEKKWTDT (105 aa).

Belongs to the WAL family. Component of the BRF-1 ISWI chromatin remodeling complex, at least composed of SMARCA1 and BAZ2B, which regulates the spacing of histone octamers on the DNA template to facilitate access to DNA. Within the BRF-1 ISWI chromatin remodeling complex interacts with SMARCA1; the interaction is direct. Component of the BRF-5 ISWI chromatin remodeling complex, at least composed of SMARCA5/SNF2H and BAZ2B, which regulates the spacing of histone octamers on the DNA template to facilitate access to DNA. Within the BRF-5 ISWI chromatin remodeling complex interacts with SMARCA5/SNF2H; the interaction is direct. Interacts with acetylated lysine residues on histone H1.4, H2A, H2B, H3 and H4 (in vitro). Interacts with EHMT1.

The protein localises to the nucleus. Functionally, regulatory subunit of the ATP-dependent BRF-1 and BRF-5 ISWI chromatin remodeling complexes, which form ordered nucleosome arrays on chromatin and facilitate access to DNA during DNA-templated processes such as DNA replication, transcription, and repair. Both complexes regulate the spacing of nucleosomes along the chromatin and have the ability to slide mononucleosomes to the center of a DNA template. The BRF-1 ISWI chromatin remodeling complex has a lower ATP hydrolysis rate than the BRF-5 ISWI chromatin remodeling complex. Chromatin reader protein, involved in positively modulating the rate of age-related behavioral deterioration. Represses the expression of mitochondrial function-related genes, perhaps by occupying their promoter regions, working in concert with histone methyltransferase EHMT1. In Mus musculus (Mouse), this protein is Bromodomain adjacent to zinc finger domain protein 2B.